Consider the following 375-residue polypeptide: uncharacterized protein (375 aa).

Residue K99 forms an Isoglutamyl lysine isopeptide (Lys-Gln) (interchain with Q-Cter in protein Pup) linkage.

It belongs to the IMPDH/GMPR family.

This is an uncharacterized protein from Mycolicibacterium smegmatis (strain ATCC 700084 / mc(2)155) (Mycobacterium smegmatis).